Consider the following 379-residue polypeptide: Heterogeneous nuclear ribonucleoprotein A3 (379 aa).

Met1 carries the post-translational modification N-acetylmethionine. Over residues 1–10 (MEVKPPPGRP) the composition is skewed to pro residues. A disordered region spans residues 1–34 (MEVKPPPGRPQPDSGRRRRRRGEEGHDPKEPEQL). A Glycyl lysine isopeptide (Lys-Gly) (interchain with G-Cter in SUMO2) cross-link involves residue Lys4. The residue at position 14 (Ser14) is a Phosphoserine. Positions 21–34 (RGEEGHDPKEPEQL) are enriched in basic and acidic residues. Residues 35–118 (RKLFIGGLSF…RAVSREDSVK (84 aa)) form the RRM 1 domain. Lys36 participates in a covalent cross-link: Glycyl lysine isopeptide (Lys-Gly) (interchain with G-Cter in SUMO2). Position 43 is a phosphoserine (Ser43). Position 52 is a dimethylated arginine; alternate (Arg52). An Omega-N-methylarginine; alternate modification is found at Arg52. Residue Arg76 is modified to Omega-N-methylarginine. Residues Ser112 and Ser116 each carry the phosphoserine modification. Lys118 is covalently cross-linked (Glycyl lysine isopeptide (Lys-Gly) (interchain with G-Cter in SUMO2)). Residue Thr124 is modified to Phosphothreonine. The region spanning 126–205 (KKIFVGGIKE…CEVKKALSKQ (80 aa)) is the RRM 2 domain. Lys134 is modified (N6-acetyllysine; alternate). Residue Lys134 forms a Glycyl lysine isopeptide (Lys-Gly) (interchain with G-Cter in SUMO2); alternate linkage. Glycyl lysine isopeptide (Lys-Gly) (interchain with G-Cter in SUMO2) cross-links involve residues Lys151 and Lys182. Residues 204 to 225 (KQEMQSAGSQRGRGGGSGNFMG) form a disordered region. Omega-N-methylarginine; alternate occurs at positions 214, 216, 226, 239, and 246. Asymmetric dimethylarginine; alternate is present on residues Arg214, Arg216, Arg226, Arg239, and Arg246. The segment covering 214–225 (RGRGGGSGNFMG) has biased composition (gly residues). Position 257 is an omega-N-methylarginine (Arg257). Arg286 carries the post-translational modification Asymmetric dimethylarginine. Positions 335-379 (NYSGQQQSNYGPMKGGSFGGRSSGSPYGGGYGSGGGSGGYGSRRF) are disordered. A compositionally biased stretch (gly residues) spans 347–379 (MKGGSFGGRSSGSPYGGGYGSGGGSGGYGSRRF). At Ser351 the chain carries Phosphoserine. Arg355 carries the omega-N-methylarginine modification. Ser359 carries the post-translational modification Phosphoserine. 2 positions are modified to phosphotyrosine: Tyr361 and Tyr365. Phosphoserine is present on residues Ser367 and Ser371. Residue Tyr374 is modified to Phosphotyrosine. At Ser376 the chain carries Phosphoserine.

Identified in the spliceosome C complex.

It is found in the nucleus. Plays a role in cytoplasmic trafficking of RNA. Binds to the cis-acting response element, A2RE. May be involved in pre-mRNA splicing. This chain is Heterogeneous nuclear ribonucleoprotein A3 (Hnrnpa3), found in Mus musculus (Mouse).